The sequence spans 302 residues: Putative peptide permease protein BRA0407/BS1330_II0404 (302 aa).

A disordered region spans residues 1-22; the sequence is MRSSIHASRLRKMGQSIPASTG. Transmembrane regions (helical) follow at residues 38 to 58, 101 to 121, 147 to 167, 200 to 222, 230 to 250, and 268 to 288; these read IFGL…PLWL, LLVA…IGAI, IFLL…VVVI, AGLG…VVYA, ILLE…AASW, and WQWL…NFIG. One can recognise an ABC transmembrane type-1 domain in the interval 97 to 288; it reads GRISLLVAVS…LAVLAINFIG (192 aa).

It belongs to the binding-protein-dependent transport system permease family. The complex is composed of two ATP-binding proteins (BRA0404 and BRA0405), two transmembrane proteins (BRA0407 and BRA0408) and a solute-binding protein (BRA0409).

The protein localises to the cell inner membrane. In terms of biological role, probably part of an ABC transporter complex that could be involved in peptide import. Probably responsible for the translocation of the substrate across the membrane. The polypeptide is Putative peptide permease protein BRA0407/BS1330_II0404 (Brucella suis biovar 1 (strain 1330)).